Reading from the N-terminus, the 115-residue chain is DNA-binding protein NP_4416A (115 aa).

Residues 1–11 (MSGEPTDEDLE) are compositionally biased toward acidic residues. Residues 1 to 46 (MSGEPTDEDLEELRKKKMEQLKEQGGEGQSEAAEAQRQQAEAQKKA) are disordered. Residues 12–25 (ELRKKKMEQLKEQG) are compositionally biased toward basic and acidic residues. A compositionally biased stretch (low complexity) spans 29–41 (QSEAAEAQRQQAE).

This sequence belongs to the PDCD5 family.

The protein is DNA-binding protein NP_4416A of Natronomonas pharaonis (strain ATCC 35678 / DSM 2160 / CIP 103997 / JCM 8858 / NBRC 14720 / NCIMB 2260 / Gabara) (Halobacterium pharaonis).